We begin with the raw amino-acid sequence, 235 residues long: Large ribosomal subunit protein uL1 (235 aa).

This sequence belongs to the universal ribosomal protein uL1 family. In terms of assembly, part of the 50S ribosomal subunit.

Its function is as follows. Binds directly to 23S rRNA. The L1 stalk is quite mobile in the ribosome, and is involved in E site tRNA release. Functionally, protein L1 is also a translational repressor protein, it controls the translation of the L11 operon by binding to its mRNA. This Fusobacterium nucleatum subsp. nucleatum (strain ATCC 25586 / DSM 15643 / BCRC 10681 / CIP 101130 / JCM 8532 / KCTC 2640 / LMG 13131 / VPI 4355) protein is Large ribosomal subunit protein uL1.